Reading from the N-terminus, the 123-residue chain is Holo-[acyl-carrier-protein] synthase (123 aa).

The Mg(2+) site is built by D7 and E56.

The protein belongs to the P-Pant transferase superfamily. AcpS family. The cofactor is Mg(2+).

Its subcellular location is the cytoplasm. The catalysed reaction is apo-[ACP] + CoA = holo-[ACP] + adenosine 3',5'-bisphosphate + H(+). In terms of biological role, transfers the 4'-phosphopantetheine moiety from coenzyme A to a Ser of acyl-carrier-protein. The polypeptide is Holo-[acyl-carrier-protein] synthase (Carboxydothermus hydrogenoformans (strain ATCC BAA-161 / DSM 6008 / Z-2901)).